The primary structure comprises 143 residues: Putative pre-16S rRNA nuclease (143 aa).

It belongs to the YqgF nuclease family.

Its subcellular location is the cytoplasm. Functionally, could be a nuclease involved in processing of the 5'-end of pre-16S rRNA. The protein is Putative pre-16S rRNA nuclease of Mesomycoplasma hyopneumoniae (strain 232) (Mycoplasma hyopneumoniae).